The sequence spans 100 residues: Protein Tat (100 aa).

A disordered region spans residues 1–20 (MEPVNPSLEPWKHPGSQPKT). The interaction with human CREBBP stretch occupies residues 1–24 (MEPVNPSLEPWKHPGSQPKTACTN). The interval 1–48 (MEPVNPSLEPWKHPGSQPKTACTNCYCKKCCFHCQACFITKGLGISYG) is transactivation. C22, C25, and C27 together coordinate Zn(2+). Residues 22–37 (CTNCYCKKCCFHCQAC) are cysteine-rich. N6-acetyllysine; by host PCAF is present on K28. Zn(2+) contacts are provided by C30, H33, C34, and C37. The core stretch occupies residues 38-48 (FITKGLGISYG). A disordered region spans residues 47-100 (YGRKKRRQRRRPPQDSQTHQVSLSKPSSQPRGDPTGPKEQKKKVERETETDPVH). Residues 48 to 57 (GRKKRRQRRR) are compositionally biased toward basic residues. Residues 49 to 57 (RKKRRQRRR) carry the Nuclear localization signal, RNA-binding (TAR), and protein transduction motif. Positions 49 to 85 (RKKRRQRRRPPQDSQTHQVSLSKPSSQPRGDPTGPKE) are interaction with the host capping enzyme RNGTT. K50 and K51 each carry N6-acetyllysine; by host EP300 and GCN5L2. R52 and R53 each carry asymmetric dimethylarginine; by host PRMT6. The segment covering 61 to 76 (DSQTHQVSLSKPSSQP) has biased composition (polar residues). A Glycyl lysine isopeptide (Lys-Gly) (interchain with G-Cter in ubiquitin) cross-link involves residue K71. Positions 77–79 (RGD) match the Cell attachment site motif. Positions 82–100 (GPKEQKKKVERETETDPVH) are enriched in basic and acidic residues.

This sequence belongs to the lentiviruses Tat family. In terms of assembly, interacts with host CCNT1. Associates with the P-TEFb complex composed at least of Tat, P-TEFb (CDK9 and CCNT1), TAR RNA, RNA Pol II. Recruits the HATs CREBBP, TAF1/TFIID, EP300, PCAF and GCN5L2. Interacts with host KAT5/Tip60; this interaction targets the latter to degradation. Interacts with the host deacetylase SIRT1. Interacts with host capping enzyme RNGTT; this interaction stimulates RNGTT. Binds to host KDR, and to the host integrins ITGAV/ITGB3 and ITGA5/ITGB1. Interacts with host KPNB1/importin beta-1 without previous binding to KPNA1/importin alpha-1. Interacts with EIF2AK2. Interacts with host nucleosome assembly protein NAP1L1; this interaction may be required for the transport of Tat within the nucleus, since the two proteins interact at the nuclear rim. Interacts with host C1QBP/SF2P32; this interaction involves lysine-acetylated Tat. Interacts with the host chemokine receptors CCR2, CCR3 and CXCR4. Interacts with host DPP4/CD26; this interaction may trigger an anti-proliferative effect. Interacts with host LDLR. Interacts with the host extracellular matrix metalloproteinase MMP1. Interacts with host PRMT6; this interaction mediates Tat's methylation. Interacts with, and is ubiquitinated by MDM2/Hdm2. Interacts with host PSMC3 and HTATIP2. Interacts with STAB1; this interaction may overcome SATB1-mediated repression of IL2 and IL2RA (interleukin) in T cells by binding to the same domain than HDAC1. Interacts (when acetylated) with human CDK13, thereby increasing HIV-1 mRNA splicing and promoting the production of the doubly spliced HIV-1 protein Nef. Interacts with host TBP; this interaction modulates the activity of transcriptional pre-initiation complex. Interacts with host RELA. Interacts with host PLSCR1; this interaction negatively regulates Tat transactivation activity by altering its subcellular distribution. Asymmetrical arginine methylation by host PRMT6 seems to diminish the transactivation capacity of Tat and affects the interaction with host CCNT1. In terms of processing, acetylation by EP300, CREBBP, GCN5L2/GCN5 and PCAF regulates the transactivation activity of Tat. EP300-mediated acetylation of Lys-50 promotes dissociation of Tat from the TAR RNA through the competitive binding to PCAF's bromodomain. In addition, the non-acetylated Tat's N-terminus can also interact with PCAF. PCAF-mediated acetylation of Lys-28 enhances Tat's binding to CCNT1. Lys-50 is deacetylated by SIRT1. Post-translationally, polyubiquitination by host MDM2 does not target Tat to degradation, but activates its transactivation function and fosters interaction with CCNT1 and TAR RNA. Phosphorylated by EIF2AK2 on serine and threonine residues adjacent to the basic region important for TAR RNA binding and function. Phosphorylation of Tat by EIF2AK2 is dependent on the prior activation of EIF2AK2 by dsRNA.

The protein resides in the host nucleus. It is found in the host nucleolus. Its subcellular location is the host cytoplasm. It localises to the secreted. Its function is as follows. Transcriptional activator that increases RNA Pol II processivity, thereby increasing the level of full-length viral transcripts. Recognizes a hairpin structure at the 5'-LTR of the nascent viral mRNAs referred to as the transactivation responsive RNA element (TAR) and recruits the cyclin T1-CDK9 complex (P-TEFb complex) that will in turn hyperphosphorylate the RNA polymerase II to allow efficient elongation. The CDK9 component of P-TEFb and other Tat-activated kinases hyperphosphorylate the C-terminus of RNA Pol II that becomes stabilized and much more processive. Other factors such as HTATSF1/Tat-SF1, SUPT5H/SPT5, and HTATIP2 are also important for Tat's function. Besides its effect on RNA Pol II processivity, Tat induces chromatin remodeling of proviral genes by recruiting the histone acetyltransferases (HATs) CREBBP, EP300 and PCAF to the chromatin. This also contributes to the increase in proviral transcription rate, especially when the provirus integrates in transcriptionally silent region of the host genome. To ensure maximal activation of the LTR, Tat mediates nuclear translocation of NF-kappa-B by interacting with host RELA. Through its interaction with host TBP, Tat may also modulate transcription initiation. Tat can reactivate a latently infected cell by penetrating in it and transactivating its LTR promoter. In the cytoplasm, Tat is thought to act as a translational activator of HIV-1 mRNAs. In terms of biological role, extracellular circulating Tat can be endocytosed by surrounding uninfected cells via the binding to several surface receptors such as CD26, CXCR4, heparan sulfate proteoglycans (HSPG) or LDLR. Neurons are rarely infected, but they internalize Tat via their LDLR. Through its interaction with nuclear HATs, Tat is potentially able to control the acetylation-dependent cellular gene expression. Modulates the expression of many cellular genes involved in cell survival, proliferation or in coding for cytokines or cytokine receptors. Tat plays a role in T-cell and neurons apoptosis. Tat induced neurotoxicity and apoptosis probably contribute to neuroAIDS. Circulating Tat also acts as a chemokine-like and/or growth factor-like molecule that binds to specific receptors on the surface of the cells, affecting many cellular pathways. In the vascular system, Tat binds to ITGAV/ITGB3 and ITGA5/ITGB1 integrins dimers at the surface of endothelial cells and competes with bFGF for heparin-binding sites, leading to an excess of soluble bFGF. This chain is Protein Tat, found in Homo sapiens (Human).